A 271-amino-acid chain; its full sequence is Putative phosphoenolpyruvate synthase regulatory protein (271 aa).

Residue 151–158 (GVSRSGKT) participates in ADP binding.

The protein belongs to the pyruvate, phosphate/water dikinase regulatory protein family. PSRP subfamily.

The catalysed reaction is [pyruvate, water dikinase] + ADP = [pyruvate, water dikinase]-phosphate + AMP + H(+). The enzyme catalyses [pyruvate, water dikinase]-phosphate + phosphate + H(+) = [pyruvate, water dikinase] + diphosphate. Functionally, bifunctional serine/threonine kinase and phosphorylase involved in the regulation of the phosphoenolpyruvate synthase (PEPS) by catalyzing its phosphorylation/dephosphorylation. In Burkholderia multivorans (strain ATCC 17616 / 249), this protein is Putative phosphoenolpyruvate synthase regulatory protein.